The chain runs to 128 residues: Sulfurtransferase TusD (128 aa).

Residue C78 is the Cysteine persulfide intermediate of the active site.

Belongs to the DsrE/TusD family. As to quaternary structure, heterohexamer, formed by a dimer of trimers. The hexameric TusBCD complex contains 2 copies each of TusB, TusC and TusD. The TusBCD complex interacts with TusE.

It is found in the cytoplasm. In terms of biological role, part of a sulfur-relay system required for 2-thiolation of 5-methylaminomethyl-2-thiouridine (mnm(5)s(2)U) at tRNA wobble positions. Accepts sulfur from TusA and transfers it in turn to TusE. The polypeptide is Sulfurtransferase TusD (Erwinia tasmaniensis (strain DSM 17950 / CFBP 7177 / CIP 109463 / NCPPB 4357 / Et1/99)).